The primary structure comprises 623 residues: Heterogeneous nuclear ribonucleoprotein Q (623 aa).

Ala-2 carries the post-translational modification N-acetylalanine. Ser-159 bears the Phosphoserine mark. 3 consecutive RRM domains span residues 162–241, 243–325, and 338–408; these read TEIF…ISVA, NRLF…WADP, and KVLF…FAKP. A Glycyl lysine isopeptide (Lys-Gly) (interchain with G-Cter in SUMO2) cross-link involves residue Lys-168. At Lys-221 the chain carries N6-acetyllysine. Lys-363 is modified (N6-acetyllysine). Tyr-373 is modified (phosphotyrosine). The interval 400–561 is interaction with APOBEC1; the sequence is NIEIVFAKPP…GARGGRGGNV (162 aa). Position 444 is an asymmetric dimethylarginine; by PRMT1; alternate (Arg-444). Arg-444 bears the Omega-N-methylarginine; by PRMT1; alternate mark. 6 repeat units span residues 448–450, 451–453, 460–464, 469–472, 478–480, and 485–488. Positions 448–559 are 8 X 3 AA repeats of R-G-G; it reads RGGRGGYGYP…VRGARGGRGG (112 aa). The 3 X 4 AA repeats of Y-Y-G-Y stretch occupies residues 460–488; it reads YYGYEDYYDYYGYDYHNYRGGYEDPYYGY. At Arg-496 the chain carries Omega-N-methylarginine; by PRMT1. Residues 497 to 623 form a disordered region; that stretch reads GRGGRGARGA…YQDTFGQQWK (127 aa). The 1-4 repeat unit spans residues 498–500; sequence RGG. Positions 504-522 are enriched in low complexity; sequence RGAAPSRGRGAAPPRGRAG. Arg-510 is subject to Asymmetric dimethylarginine; by PRMT1. Asymmetric dimethylarginine; by PRMT1; alternate is present on Arg-518. Position 518 is an omega-N-methylarginine; by PRMT1; alternate (Arg-518). Positions 518 to 549 are interaction with SMN; sequence RGRAGYSQRGGPGSARGVRGARGGAQQQRGRG. Arg-526 bears the Asymmetric dimethylarginine; alternate mark. Position 526 is an omega-N-methylarginine; alternate (Arg-526). Residues 526 to 528 form a 1-5 repeat; it reads RGG. Asymmetric dimethylarginine; by PRMT1; alternate occurs at positions 536 and 539. Omega-N-methylarginine; by PRMT1; alternate occurs at positions 536 and 539. 3 repeat units span residues 539 to 541, 554 to 556, and 557 to 559. A compositionally biased stretch (gly residues) spans 550 to 562; that stretch reads VRGARGGRGGNVG. A Bipartite nuclear localization signal motif is present at residues 564 to 578; it reads KRKADGYNQPDTKRR. The span at 580–595 shows a compositional bias: polar residues; it reads TNNQNWGSQPIAQQPL. The residue at position 587 (Ser-587) is a Phosphoserine. Residue Lys-607 forms a Glycyl lysine isopeptide (Lys-Gly) (interchain with G-Cter in SUMO2) linkage. The segment covering 611–623 has biased composition (polar residues); that stretch reads QEFYQDTFGQQWK.

Identified in the spliceosome C complex. Component of the coding region determinant (CRD)-mediated complex, composed of DHX9, HNRNPU, IGF2BP1, SYNCRIP and YBX1. Identified in a mRNP complex, at least composed of DHX9, DDX3X, ELAVL1, HNRNPU, IGF2BP1, ILF3, PABPC1, PCBP2, PTBP2, STAU1, STAU2, SYNCRIP and YBX1. Identified in a mRNP granule complex, at least composed of ACTB, ACTN4, DHX9, ERG, HNRNPA1, HNRNPA2B1, HNRNPAB, HNRNPD, HNRNPL, HNRNPR, HNRNPU, HSPA1, HSPA8, IGF2BP1, ILF2, ILF3, NCBP1, NCL, PABPC1, PABPC4, PABPN1, RPLP0, RPS3, RPS3A, RPS4X, RPS8, RPS9, SYNCRIP, YBX1 and untranslated mRNAs. Interacts with GTPBP1. Isoform 1 is a component of the APOB mRNA editosome complex. Isoform 1 interacts with APOBEC1 and A1CF. Part of a complex associated with the FOS mCRD domain and consisting of PABPC1, PAIP1, CSDE1/UNR, HNRPD and SYNCRIP. Isoform 2 interacts with HNRPR. Interacts with POLR2A hyperphosphorylated C-terminal domain. Interacts with HABP4. Identified in a histone pre-mRNA complex, at least composed of ERI1, LSM11, SLBP, SNRPB, SYNCRIP and YBX1. Isoform 1 and isoform 2 interact with SMN. Isoform 2 interacts through its C-terminal domain with SYT7, SYT8 and SYT9. The non-phosphorylated and phosphorylated forms are colocalized with PAIP1 in polysomes. In terms of processing, phosphorylated on tyrosine. The membrane-bound form found in microsomes is phosphorylated in vitro by insulin receptor tyrosine kinase (INSR). Phosphorylation is inhibited upon binding to RNA, whereas the cytoplasmic form is poorly phosphorylated. In terms of tissue distribution, ubiquitous. Detected in heart, brain, spleen, lung, liver, skeletal muscle, adipocytes, kidney and testis.

Its subcellular location is the nucleus. The protein localises to the nucleoplasm. It is found in the microsome. The protein resides in the cytoplasm. Functionally, heterogeneous nuclear ribonucleoprotein (hnRNP) implicated in mRNA processing mechanisms. Component of the CRD-mediated complex that promotes MYC mRNA stability. Isoform 1 and isoform 2 are associated in vitro with pre-mRNA, splicing intermediates and mature mRNA protein complexes. Isoform 1 binds to apoB mRNA AU-rich sequences. Isoform 1 is part of the APOB mRNA editosome complex and may modulate the postranscriptional C to U RNA-editing of the APOB mRNA through either by binding to A1CF (APOBEC1 complementation factor), to APOBEC1 or to RNA itself. May be involved in translationally coupled mRNA turnover. Implicated with other RNA-binding proteins in the cytoplasmic deadenylation/translational and decay interplay of the FOS mRNA mediated by the major coding-region determinant of instability (mCRD) domain. Interacts in vitro preferentially with poly(A) and poly(U) RNA sequences. Isoform 2 may be involved in cytoplasmic vesicle-based mRNA transport through interaction with synaptotagmins. This chain is Heterogeneous nuclear ribonucleoprotein Q (Syncrip), found in Mus musculus (Mouse).